A 161-amino-acid polypeptide reads, in one-letter code: Cyclic pyranopterin monophosphate synthase (161 aa).

Residues 78–80 (LCH) and 116–117 (ME) contribute to the substrate site. Aspartate 131 is a catalytic residue.

The protein belongs to the MoaC family. Homohexamer; trimer of dimers.

The enzyme catalyses (8S)-3',8-cyclo-7,8-dihydroguanosine 5'-triphosphate = cyclic pyranopterin phosphate + diphosphate. It functions in the pathway cofactor biosynthesis; molybdopterin biosynthesis. Catalyzes the conversion of (8S)-3',8-cyclo-7,8-dihydroguanosine 5'-triphosphate to cyclic pyranopterin monophosphate (cPMP). This chain is Cyclic pyranopterin monophosphate synthase, found in Bordetella pertussis (strain Tohama I / ATCC BAA-589 / NCTC 13251).